A 63-amino-acid polypeptide reads, in one-letter code: MAVPARRTSKTKKRMRRGHIKLNVPNLQFDAATGEYRISHHVSPKGYYKGAQVVKKSDDNANA.

It belongs to the bacterial ribosomal protein bL32 family.

This Lacticaseibacillus paracasei (strain ATCC 334 / BCRC 17002 / CCUG 31169 / CIP 107868 / KCTC 3260 / NRRL B-441) (Lactobacillus paracasei) protein is Large ribosomal subunit protein bL32.